Here is a 300-residue protein sequence, read N- to C-terminus: N-acetylmuramic acid 6-phosphate etherase (300 aa).

The region spanning 57–220 (IAVAFQSGGR…TTGAMIRTGK (164 aa)) is the SIS domain. The Proton donor role is filled by glutamate 85. The active site involves glutamate 116.

The protein belongs to the GCKR-like family. MurNAc-6-P etherase subfamily. In terms of assembly, homodimer.

It catalyses the reaction N-acetyl-D-muramate 6-phosphate + H2O = N-acetyl-D-glucosamine 6-phosphate + (R)-lactate. Its pathway is amino-sugar metabolism; 1,6-anhydro-N-acetylmuramate degradation. It participates in amino-sugar metabolism; N-acetylmuramate degradation. The protein operates within cell wall biogenesis; peptidoglycan recycling. In terms of biological role, specifically catalyzes the cleavage of the D-lactyl ether substituent of MurNAc 6-phosphate, producing GlcNAc 6-phosphate and D-lactate. Together with AnmK, is also required for the utilization of anhydro-N-acetylmuramic acid (anhMurNAc) either imported from the medium or derived from its own cell wall murein, and thus plays a role in cell wall recycling. This chain is N-acetylmuramic acid 6-phosphate etherase, found in Aliivibrio fischeri (strain ATCC 700601 / ES114) (Vibrio fischeri).